The following is a 529-amino-acid chain: Bifunctional purine biosynthesis protein PurH (529 aa).

One can recognise an MGS-like domain in the interval 1–148 (MNNARPIRRA…KNHKDTTIIV (148 aa)).

It belongs to the PurH family.

The catalysed reaction is (6R)-10-formyltetrahydrofolate + 5-amino-1-(5-phospho-beta-D-ribosyl)imidazole-4-carboxamide = 5-formamido-1-(5-phospho-D-ribosyl)imidazole-4-carboxamide + (6S)-5,6,7,8-tetrahydrofolate. It carries out the reaction IMP + H2O = 5-formamido-1-(5-phospho-D-ribosyl)imidazole-4-carboxamide. Its pathway is purine metabolism; IMP biosynthesis via de novo pathway; 5-formamido-1-(5-phospho-D-ribosyl)imidazole-4-carboxamide from 5-amino-1-(5-phospho-D-ribosyl)imidazole-4-carboxamide (10-formyl THF route): step 1/1. It functions in the pathway purine metabolism; IMP biosynthesis via de novo pathway; IMP from 5-formamido-1-(5-phospho-D-ribosyl)imidazole-4-carboxamide: step 1/1. In Shewanella piezotolerans (strain WP3 / JCM 13877), this protein is Bifunctional purine biosynthesis protein PurH.